The following is a 152-amino-acid chain: Globin CTT-E/E' (152 aa).

The first 15 residues, 1 to 15, serve as a signal peptide directing secretion; the sequence is MKFIILALCVAAASA. The region spanning 16 to 152 is the Globin domain; sequence LSGDQIGLVQ…AFFGAVFAKM (137 aa). H73 and H102 together coordinate heme b.

This sequence belongs to the globin family.

The sequence is that of Globin CTT-E/E' (CTT-E) from Chironomus thummi thummi (Midge).